Consider the following 155-residue polypeptide: Transcriptional repressor NrdR (155 aa).

Over residues 1–11 (MECPNCHQNAS) the composition is skewed to polar residues. Positions 1-22 (MECPNCHQNASRVIDSRPSDEN) are disordered. A zinc finger spans residues 3–34 (CPNCHQNASRVIDSRPSDENRAIRRRRECENC). Residues 49-139 (LLVVKNDGTR…IYREFKDMSS (91 aa)) enclose the ATP-cone domain.

Belongs to the NrdR family. The cofactor is Zn(2+).

Negatively regulates transcription of bacterial ribonucleotide reductase nrd genes and operons by binding to NrdR-boxes. The sequence is that of Transcriptional repressor NrdR from Lactobacillus acidophilus (strain ATCC 700396 / NCK56 / N2 / NCFM).